The chain runs to 295 residues: Small ribosomal subunit protein uS2 (295 aa).

Residue serine 2 is modified to N-acetylserine. Serine 43 bears the Phosphoserine mark. Residue lysine 52 is modified to N6-acetyllysine. The interval 54–113 is interaction with PPP1R16B; it reads TWEKLLLAARAIVAIENPADVSVISSRNTGQRAVLKFAAATGATPIAGRFTPGTFTNQIQ. An N6-acetyllysine; alternate modification is found at lysine 89. Lysine 89 is covalently cross-linked (Glycyl lysine isopeptide (Lys-Gly) (interchain with G-Cter in SUMO2); alternate). Threonine 97 is modified (phosphothreonine). Laminin-binding stretches follow at residues 161–180 and 205–229; these read IPCNNKGAHSVGLMWWMLAR and RDPEEIEKEEQAAAEKAVTKEEFQG. 5 [DE]-W-[ST] repeats span residues 230-232, 247-249, 266-268, 275-277, and 293-295; these read EWT, DWS, and EWS. A laminin-binding region spans residues 242–295; that stretch reads QPEVADWSEGVQVPSVPIQQFPTEDWSAQPATEDWSAAPTAQATEWVGATTEWS. A disordered region spans residues 266 to 295; that stretch reads DWSAQPATEDWSAAPTAQATEWVGATTEWS.

Belongs to the universal ribosomal protein uS2 family. In terms of assembly, monomer (37LRP) and homodimer (67LR). Component of the small ribosomal subunit. Mature ribosomes consist of a small (40S) and a large (60S) subunit. The 40S subunit contains about 33 different proteins and 1 molecule of RNA (18S). The 60S subunit contains about 49 different proteins and 3 molecules of RNA (28S, 5.8S and 5S). Interacts with RPS21. Interacts with several laminins including at least LAMB1. Interacts with MDK. Interacts with PRNP. The mature dimeric form interacts with PPP1R16B (via its fourth ankyrin repeat). Interacts with PPP1CA only in the presence of PPP1R16B. Acylated. Acylation may be a prerequisite for conversion of the monomeric 37 kDa laminin receptor precursor (37LRP) to the mature dimeric 67 kDa laminin receptor (67LR), and may provide a mechanism for membrane association. In terms of processing, cleaved by stromelysin-3 (ST3) at the cell surface. Cleavage by stromelysin-3 may be a mechanism to alter cell-extracellular matrix interactions.

The protein resides in the cell membrane. The protein localises to the cytoplasm. Its subcellular location is the nucleus. Its function is as follows. Required for the assembly and/or stability of the 40S ribosomal subunit. Required for the processing of the 20S rRNA-precursor to mature 18S rRNA in a late step of the maturation of 40S ribosomal subunits. Also functions as a cell surface receptor for laminin. Plays a role in cell adhesion to the basement membrane and in the consequent activation of signaling transduction pathways. May play a role in cell fate determination and tissue morphogenesis. Also acts as a receptor for several other ligands, including the pathogenic prion protein, viruses, and bacteria. Acts as a PPP1R16B-dependent substrate of PPP1CA. Enables malignant tumor cells to penetrate laminin tissue and vessel barriers. Activates precursor thymic anti-OFA/iLRP specific cytotoxic T-cell. May induce CD8 T-suppressor cells secreting IL-10. The protein is Small ribosomal subunit protein uS2 (Rpsa) of Mus musculus (Mouse).